A 254-amino-acid chain; its full sequence is Type III pantothenate kinase (254 aa).

Position 6–13 (6–13) interacts with ATP; that stretch reads DVGNTNTV. Substrate is bound by residues Tyr100 and 107-110; that span reads GADR. The active-site Proton acceptor is the Asp109. Residue Asp129 coordinates K(+). Residue Thr132 coordinates ATP. Thr184 contacts substrate.

The protein belongs to the type III pantothenate kinase family. Homodimer. NH4(+) serves as cofactor. The cofactor is K(+).

The protein resides in the cytoplasm. The catalysed reaction is (R)-pantothenate + ATP = (R)-4'-phosphopantothenate + ADP + H(+). The protein operates within cofactor biosynthesis; coenzyme A biosynthesis; CoA from (R)-pantothenate: step 1/5. Functionally, catalyzes the phosphorylation of pantothenate (Pan), the first step in CoA biosynthesis. This Halalkalibacterium halodurans (strain ATCC BAA-125 / DSM 18197 / FERM 7344 / JCM 9153 / C-125) (Bacillus halodurans) protein is Type III pantothenate kinase.